Here is a 260-residue protein sequence, read N- to C-terminus: Zinc import ATP-binding protein ZnuC (260 aa).

In terms of domain architecture, ABC transporter spans 14–229 (LTARNLCADR…PEFARLFGDQ (216 aa)). 46 to 53 (GPNGAGKS) is an ATP binding site.

Belongs to the ABC transporter superfamily. Zinc importer (TC 3.A.1.15.5) family. In terms of assembly, the complex is composed of two ATP-binding proteins (ZnuC), two transmembrane proteins (ZnuB) and a solute-binding protein (ZnuA).

Its subcellular location is the cell inner membrane. The enzyme catalyses Zn(2+)(out) + ATP(in) + H2O(in) = Zn(2+)(in) + ADP(in) + phosphate(in) + H(+)(in). Part of the ABC transporter complex ZnuABC involved in zinc import. Responsible for energy coupling to the transport system. The chain is Zinc import ATP-binding protein ZnuC from Magnetococcus marinus (strain ATCC BAA-1437 / JCM 17883 / MC-1).